Here is a 398-residue protein sequence, read N- to C-terminus: MTTNTVSRKVAWLRVVTLAIAAFIFNTTEFVPVGLLSDIAQSFQMETAQVGIMLTIYAWVVALMSLPFMLLTSQMERRKLLIGLFVLFIASHVLSFLAWNFNVLVISRIGIAFAHAIFWSITASLAIRLAPAGKRAQALSLLATGTALAMVLGLPIGRIVGQYFGWRTTFFAIGLGALITLLCLIKLLPKLPSEHSGSLKSLPLLFRRPALMSIYLLTVVVVTAHYTAYSYIEPFVQVVAGFSANFATVLLLILGGAGIIGSVLFGKLGNKHASLLVSSAIGLLLACLLLLMPAAQSETHLAILSIFWGVAIMIIGLGMQVKVLALAPDATDVAMSLFSGIFNIGIGAGALVGNQISLHLSMSAIGYLGAIPALAALIWSILIFRKWPVALEEQPHHG.

A run of 12 helical transmembrane segments spans residues 15 to 35 (VVTLAIAAFIFNTTEFVPVGL), 50 to 70 (VGIMLTIYAWVVALMSLPFML), 81 to 101 (LIGLFVLFIASHVLSFLAWNF), 103 to 123 (VLVISRIGIAFAHAIFWSITA), 136 to 156 (AQALSLLATGTALAMVLGLPI), 169 to 189 (TFFAIGLGALITLLCLIKLLP), 209 to 229 (PALMSIYLLTVVVVTAHYTAY), 246 to 266 (FATVLLLILGGAGIIGSVLFG), 275 to 295 (LLVSSAIGLLLACLLLLMPAA), 301 to 321 (LAILSIFWGVAIMIIGLGMQV), 333 to 353 (VAMSLFSGIFNIGIGAGALVG), and 364 to 384 (AIGYLGAIPALAALIWSILIF).

The protein belongs to the major facilitator superfamily. SotB (TC 2.A.1.2) family.

It is found in the cell inner membrane. In terms of biological role, involved in the efflux of sugars. The physiological role may be the reduction of the intracellular concentration of toxic sugars or sugar metabolites. The polypeptide is Probable sugar efflux transporter (Enterobacter sp. (strain 638)).